The primary structure comprises 637 residues: Chaperone protein HtpG (637 aa).

The segment at Met-1–Arg-345 is a; substrate-binding. A b region spans residues Glu-346–Lys-562. A c region spans residues Leu-563–Lys-637.

Belongs to the heat shock protein 90 family. In terms of assembly, homodimer.

Its subcellular location is the cytoplasm. Its function is as follows. Molecular chaperone. Has ATPase activity. The sequence is that of Chaperone protein HtpG from Shewanella sp. (strain MR-7).